The chain runs to 262 residues: Hydroxyacylglutathione hydrolase (262 aa).

Zn(2+) is bound by residues H53, H55, D57, H58, H111, D128, and H166.

It belongs to the metallo-beta-lactamase superfamily. Glyoxalase II family. Monomer. Zn(2+) serves as cofactor.

The enzyme catalyses an S-(2-hydroxyacyl)glutathione + H2O = a 2-hydroxy carboxylate + glutathione + H(+). It functions in the pathway secondary metabolite metabolism; methylglyoxal degradation; (R)-lactate from methylglyoxal: step 2/2. Its function is as follows. Thiolesterase that catalyzes the hydrolysis of S-D-lactoyl-glutathione to form glutathione and D-lactic acid. The polypeptide is Hydroxyacylglutathione hydrolase (Nitrosomonas europaea (strain ATCC 19718 / CIP 103999 / KCTC 2705 / NBRC 14298)).